The sequence spans 734 residues: Tripartite terminase subunit 3 (734 aa).

The Nuclear localization signal signature appears at 183 to 189 (PKKRAKV). The short motif at 258-265 (VPRRHGKT) is the Walker A motif element. The Walker B motif signature appears at 352–357 (LLFVDE). Catalysis depends on Glu357, which acts as the For ATPase activity. Active-site for nuclease activity residues include Asp509, Glu581, and Asp706.

This sequence belongs to the herpesviridae TRM3 protein family. Interacts with the terminase subunits TRM1 and TRM2. Interacts with portal protein.

The protein localises to the host nucleus. Its function is as follows. Component of the molecular motor that translocates viral genomic DNA in empty capsid during DNA packaging. Forms a tripartite terminase complex together with TRM1 and TRM2 in the host cytoplasm. Once the complex reaches the host nucleus, it interacts with the capsid portal vertex. This portal forms a ring in which genomic DNA is translocated into the capsid. TRM3 carries an RNase H-like nuclease activity that plays an important role for the cleavage of concatemeric viral DNA into unit length genomes. The protein is Tripartite terminase subunit 3 of Human herpesvirus 2 (strain HG52) (HHV-2).